Consider the following 247-residue polypeptide: PF03932 family protein CutC (247 aa).

It belongs to the CutC family.

The protein resides in the cytoplasm. This chain is PF03932 family protein CutC, found in Klebsiella pneumoniae subsp. pneumoniae (strain ATCC 700721 / MGH 78578).